A 544-amino-acid polypeptide reads, in one-letter code: Glucose-6-phosphate isomerase (544 aa).

E354 functions as the Proton donor in the catalytic mechanism. Residues H385 and K510 contribute to the active site.

The protein belongs to the GPI family.

It localises to the cytoplasm. The enzyme catalyses alpha-D-glucose 6-phosphate = beta-D-fructose 6-phosphate. It functions in the pathway carbohydrate biosynthesis; gluconeogenesis. It participates in carbohydrate degradation; glycolysis; D-glyceraldehyde 3-phosphate and glycerone phosphate from D-glucose: step 2/4. In terms of biological role, catalyzes the reversible isomerization of glucose-6-phosphate to fructose-6-phosphate. The protein is Glucose-6-phosphate isomerase of Deinococcus deserti (strain DSM 17065 / CIP 109153 / LMG 22923 / VCD115).